A 493-amino-acid polypeptide reads, in one-letter code: Cytochrome P450 2E1 (493 aa).

Residue 298 to 303 participates in substrate binding; the sequence is FAGTET. Residue cysteine 437 participates in heme binding.

It belongs to the cytochrome P450 family. In terms of assembly, interacts with chaperones HSP70 and HSP90; this interaction is required for initial targeting to mitochondria. It depends on heme as a cofactor. In terms of tissue distribution, highest level in the liver and to a lesser extent in the kidney, with a higher level in the male kidney than in the female.

It is found in the endoplasmic reticulum membrane. Its subcellular location is the microsome membrane. The protein localises to the mitochondrion inner membrane. The enzyme catalyses an organic molecule + reduced [NADPH--hemoprotein reductase] + O2 = an alcohol + oxidized [NADPH--hemoprotein reductase] + H2O + H(+). It carries out the reaction (5Z,8Z,11Z)-eicosatrienoate + reduced [NADPH--hemoprotein reductase] + O2 = 19-hydroxy-(5Z,8Z,11Z)-eicosatrienoate + oxidized [NADPH--hemoprotein reductase] + H2O + H(+). It catalyses the reaction (5Z,8Z,11Z,14Z,17Z)-eicosapentaenoate + reduced [NADPH--hemoprotein reductase] + O2 = 19-hydroxy-(5Z,8Z,11Z,14Z,17Z)-eicosapentaenoate + oxidized [NADPH--hemoprotein reductase] + H2O + H(+). The catalysed reaction is (4Z,7Z,10Z,13Z,16Z,19Z)-docosahexaenoate + reduced [NADPH--hemoprotein reductase] + O2 = 21-hydroxy-(4Z,7Z,10Z,13Z,16Z,19Z)-docosahexaenoate + oxidized [NADPH--hemoprotein reductase] + H2O + H(+). The enzyme catalyses dodecanoate + reduced [NADPH--hemoprotein reductase] + O2 = 11-hydroxydodecanoate + oxidized [NADPH--hemoprotein reductase] + H2O + H(+). It carries out the reaction tetradecanoate + reduced [NADPH--hemoprotein reductase] + O2 = 13-hydroxytetradecanoate + oxidized [NADPH--hemoprotein reductase] + H2O + H(+). It catalyses the reaction 4-nitrophenol + NADPH + O2 + H(+) = 4-nitrocatechol + NADP(+) + H2O. Its pathway is lipid metabolism; fatty acid metabolism. With respect to regulation, the omega-1 hydroxylase activity is stimulated by cytochrome b5. Functionally, a cytochrome P450 monooxygenase involved in the metabolism of fatty acids. Mechanistically, uses molecular oxygen inserting one oxygen atom into a substrate, and reducing the second into a water molecule, with two electrons provided by NADPH via cytochrome P450 reductase (NADPH--hemoprotein reductase). Catalyzes the hydroxylation of carbon-hydrogen bonds. Hydroxylates fatty acids specifically at the omega-1 position displaying the highest catalytic activity for saturated fatty acids. May be involved in the oxidative metabolism of xenobiotics. The chain is Cytochrome P450 2E1 (Cyp2e1) from Mus musculus (Mouse).